Consider the following 78-residue polypeptide: Pancreatic polypeptide prohormone (78 aa).

A signal peptide spans 1-19; sequence LLLSTCVALLLQPPLGALG. A Tyrosine amide modification is found at tyrosine 55.

This sequence belongs to the NPY family.

It localises to the secreted. Its function is as follows. Hormone secreted by pancreatic cells that acts as a regulator of pancreatic and gastrointestinal functions probably by signaling through the G protein-coupled receptor NPY4R2. This is Pancreatic polypeptide prohormone (PPY) from Ovis aries (Sheep).